The chain runs to 445 residues: tRNA-2-methylthio-N(6)-dimethylallyladenosine synthase (445 aa).

The 118-residue stretch at 3–120 (RKLFIQTHGC…LPGLITQAAS (118 aa)) folds into the MTTase N-terminal domain. Positions 12, 49, 83, 157, 161, and 164 each coordinate [4Fe-4S] cluster. Residues 143-375 (SVDGPSAFVS…QQRINQNVQD (233 aa)) enclose the Radical SAM core domain. Positions 378–442 (RKMVGSTQRI…SNSLLGTDPR (65 aa)) constitute a TRAM domain.

Belongs to the methylthiotransferase family. MiaB subfamily. Monomer. [4Fe-4S] cluster is required as a cofactor.

The protein localises to the cytoplasm. It catalyses the reaction N(6)-dimethylallyladenosine(37) in tRNA + (sulfur carrier)-SH + AH2 + 2 S-adenosyl-L-methionine = 2-methylsulfanyl-N(6)-dimethylallyladenosine(37) in tRNA + (sulfur carrier)-H + 5'-deoxyadenosine + L-methionine + A + S-adenosyl-L-homocysteine + 2 H(+). In terms of biological role, catalyzes the methylthiolation of N6-(dimethylallyl)adenosine (i(6)A), leading to the formation of 2-methylthio-N6-(dimethylallyl)adenosine (ms(2)i(6)A) at position 37 in tRNAs that read codons beginning with uridine. In Alcanivorax borkumensis (strain ATCC 700651 / DSM 11573 / NCIMB 13689 / SK2), this protein is tRNA-2-methylthio-N(6)-dimethylallyladenosine synthase.